Reading from the N-terminus, the 424-residue chain is Serine--tRNA ligase (424 aa).

Position 229 to 231 (229 to 231 (TAE)) interacts with L-serine. Residue 260–262 (RRE) participates in ATP binding. E283 lines the L-serine pocket. Residue 347–350 (EVSS) coordinates ATP. S383 contacts L-serine.

It belongs to the class-II aminoacyl-tRNA synthetase family. Type-1 seryl-tRNA synthetase subfamily. In terms of assembly, homodimer. The tRNA molecule binds across the dimer.

The protein localises to the cytoplasm. It carries out the reaction tRNA(Ser) + L-serine + ATP = L-seryl-tRNA(Ser) + AMP + diphosphate + H(+). The enzyme catalyses tRNA(Sec) + L-serine + ATP = L-seryl-tRNA(Sec) + AMP + diphosphate + H(+). Its pathway is aminoacyl-tRNA biosynthesis; selenocysteinyl-tRNA(Sec) biosynthesis; L-seryl-tRNA(Sec) from L-serine and tRNA(Sec): step 1/1. Catalyzes the attachment of serine to tRNA(Ser). Is also able to aminoacylate tRNA(Sec) with serine, to form the misacylated tRNA L-seryl-tRNA(Sec), which will be further converted into selenocysteinyl-tRNA(Sec). In Roseiflexus sp. (strain RS-1), this protein is Serine--tRNA ligase.